Reading from the N-terminus, the 255-residue chain is tRNA (guanine-N(7)-)-methyltransferase (255 aa).

The segment at 1–21 is disordered; that stretch reads MMHDDPNEAGLPPHDDAIPDE. Positions 86, 111, 138, and 161 each coordinate S-adenosyl-L-methionine. D161 is an active-site residue. Residues K165, D197, and 232 to 235 each bind substrate; that span reads TKFE.

It belongs to the class I-like SAM-binding methyltransferase superfamily. TrmB family.

It carries out the reaction guanosine(46) in tRNA + S-adenosyl-L-methionine = N(7)-methylguanosine(46) in tRNA + S-adenosyl-L-homocysteine. It participates in tRNA modification; N(7)-methylguanine-tRNA biosynthesis. Functionally, catalyzes the formation of N(7)-methylguanine at position 46 (m7G46) in tRNA. The polypeptide is tRNA (guanine-N(7)-)-methyltransferase (Burkholderia lata (strain ATCC 17760 / DSM 23089 / LMG 22485 / NCIMB 9086 / R18194 / 383)).